We begin with the raw amino-acid sequence, 151 residues long: Small ribosomal subunit protein uS9 (151 aa).

Low complexity predominate over residues 1 to 19 (MTETTPAPQTPAAPAGPAQ). Disordered stretches follow at residues 1-20 (MTET…PAQS) and 121-151 (KAGF…YSKR). Over residues 127–136 (RDPRATERKK) the composition is skewed to basic and acidic residues. Positions 137-151 (YGLKKARKAPQYSKR) are enriched in basic residues.

The protein belongs to the universal ribosomal protein uS9 family.

The chain is Small ribosomal subunit protein uS9 (rpsI) from Mycobacterium bovis (strain ATCC BAA-935 / AF2122/97).